Here is a 196-residue protein sequence, read N- to C-terminus: Translation initiation factor IF-3 (196 aa).

It belongs to the IF-3 family. Monomer.

The protein resides in the cytoplasm. Its function is as follows. IF-3 binds to the 30S ribosomal subunit and shifts the equilibrium between 70S ribosomes and their 50S and 30S subunits in favor of the free subunits, thus enhancing the availability of 30S subunits on which protein synthesis initiation begins. The polypeptide is Translation initiation factor IF-3 (Wigglesworthia glossinidia brevipalpis).